Consider the following 428-residue polypeptide: Enolase 3 (428 aa).

Gln163 contacts (2R)-2-phosphoglycerate. The Proton donor role is filled by Glu205. Mg(2+)-binding residues include Asp242, Glu286, and Asp313. (2R)-2-phosphoglycerate is bound by residues Lys338, Arg367, Ser368, and Lys389. Lys338 (proton acceptor) is an active-site residue.

Belongs to the enolase family. Mg(2+) serves as cofactor.

The protein localises to the cytoplasm. Its subcellular location is the secreted. It localises to the cell surface. It catalyses the reaction (2R)-2-phosphoglycerate = phosphoenolpyruvate + H2O. The protein operates within carbohydrate degradation; glycolysis; pyruvate from D-glyceraldehyde 3-phosphate: step 4/5. Catalyzes the reversible conversion of 2-phosphoglycerate (2-PG) into phosphoenolpyruvate (PEP). It is essential for the degradation of carbohydrates via glycolysis. This is Enolase 3 from Lactobacillus johnsonii (strain CNCM I-12250 / La1 / NCC 533).